A 211-amino-acid chain; its full sequence is Large ribosomal subunit protein uL3 (211 aa).

Gln150 carries the N5-methylglutamine modification.

Belongs to the universal ribosomal protein uL3 family. Part of the 50S ribosomal subunit. Forms a cluster with proteins L14 and L19. In terms of processing, methylated by PrmB.

Functionally, one of the primary rRNA binding proteins, it binds directly near the 3'-end of the 23S rRNA, where it nucleates assembly of the 50S subunit. In Pseudomonas putida (strain GB-1), this protein is Large ribosomal subunit protein uL3.